The sequence spans 669 residues: DNA ligase (669 aa).

NAD(+) contacts are provided by residues 31 to 35 (DSVYD), 80 to 81 (SL), and Glu112. Lys114 acts as the N6-AMP-lysine intermediate in catalysis. Residues Arg135, Glu172, Lys289, and Lys313 each contribute to the NAD(+) site. Residues Cys407, Cys410, Cys425, and Cys430 each contribute to the Zn(2+) site. The region spanning 591–669 (TDSGKLKGKT…EAEFLQLLEP (79 aa)) is the BRCT domain.

It belongs to the NAD-dependent DNA ligase family. LigA subfamily. The cofactor is Mg(2+). Mn(2+) is required as a cofactor.

It catalyses the reaction NAD(+) + (deoxyribonucleotide)n-3'-hydroxyl + 5'-phospho-(deoxyribonucleotide)m = (deoxyribonucleotide)n+m + AMP + beta-nicotinamide D-nucleotide.. Its function is as follows. DNA ligase that catalyzes the formation of phosphodiester linkages between 5'-phosphoryl and 3'-hydroxyl groups in double-stranded DNA using NAD as a coenzyme and as the energy source for the reaction. It is essential for DNA replication and repair of damaged DNA. The polypeptide is DNA ligase (Synechocystis sp. (strain ATCC 27184 / PCC 6803 / Kazusa)).